Reading from the N-terminus, the 154-residue chain is MTSIAGGHGEANPNSSWLSARGFWLAYLLGLLSVHLLFLSVPFVSIPWAWTATNLLHNAAHLYFLHVIKGAPWLSTENDPSRRWTHWEQIDDGVQMTTTRKFLTAVPIVLFLLTCLYTRNNTEHFIPNFISLVVVTLPKLPQFHGVRLFNINKY.

N-linked (GlcNAc...) asparagine glycosylation occurs at N14. 2 helical membrane-spanning segments follow: residues F23–F43 and F102–T118. Residue N120 is glycosylated (N-linked (GlcNAc...) asparagine).

The protein belongs to the ORM family. As to expression, ubiquitously and homogeneously expressed in the syncytial blastoderm and during the cellularization stage. In stages 11-12, it is expressed in the germ-band layer In later stages (stage 14), it is mainly detected in the ectodermal tissues. In imaginal disks of third-instar larvae, it is uniformly and homogeneously expressed in eye-antenna, leg, wing and haltere imaginal disks, which is consistent with the former ectodermal expression detected in latestage embryos.

The protein resides in the endoplasmic reticulum membrane. Functionally, negative regulator of sphingolipid synthesis. The sequence is that of ORM1-like protein (ORMDL) from Drosophila melanogaster (Fruit fly).